A 465-amino-acid chain; its full sequence is Probable zinc metalloprotease PTT_17836 (465 aa).

Positions 1 to 20 are cleaved as a signal peptide; sequence MRSASTLAVCAATLLQIACS. N-linked (GlcNAc...) asparagine glycosylation occurs at asparagine 140. The Zn(2+) site is built by histidine 163, aspartate 183, and glutamate 216. Asparagine 231 is a glycosylation site (N-linked (GlcNAc...) asparagine). Aspartate 243 contributes to the Zn(2+) binding site. 6 N-linked (GlcNAc...) asparagine glycosylation sites follow: asparagine 272, asparagine 330, asparagine 378, asparagine 384, asparagine 421, and asparagine 426. A Fibronectin type-III domain is found at 371–464; sequence APTNVGVNTT…LPFPFGCARN (94 aa).

Belongs to the peptidase M28 family. M28B subfamily. Zn(2+) serves as cofactor.

The protein resides in the secreted. The polypeptide is Probable zinc metalloprotease PTT_17836 (Pyrenophora teres f. teres (strain 0-1) (Barley net blotch fungus)).